We begin with the raw amino-acid sequence, 236 residues long: Snake venom serine protease ussurin (236 aa).

One can recognise a Peptidase S1 domain in the interval 1–227 (VIGGVECNIN…YTDWIQSIIS (227 aa)). Cys-28 and Cys-44 are joined by a disulfide. Active-site charge relay system residues include His-43 and Asp-88. N-linked (GlcNAc...) asparagine glycans are attached at residues Asn-99 and Asn-100. 3 disulfide bridges follow: Cys-120/Cys-188, Cys-152/Cys-167, and Cys-178/Cys-203. Ser-182 functions as the Charge relay system in the catalytic mechanism.

It belongs to the peptidase S1 family. Snake venom subfamily. Monomer. In terms of tissue distribution, expressed by the venom gland.

It is found in the secreted. Its function is as follows. Snake venom serine protease that may act in the hemostasis system of the prey. The sequence is that of Snake venom serine protease ussurin from Gloydius ussuriensis (Ussuri mamushi).